The sequence spans 303 residues: MKIIFMGSPEFSVPALCALLEEKDHEVIAVYTRLPKPAGRRGKVLTKTPIHIIAEQNNIEVNTPKSLKHDYEQEKIFALNPDVIVVVAYGLIIPEAVLSIPKYGCINIHPSLLPRWRGAAPIHYAILSGDEQTGVTIMQMNELWDEGDILLQRDIPIDEQDNIDTLSQKLSNLGSSMLIEVLNNIDHLVPIKQNANDATYTNKIIDFHIDCNEEAQVICRKIRALYPKAFLFFNDKRLRILKANYCPDSDLQNLKPGTVINSHMHIKCKNGVLIPLIVQLEGKNPCSINDFIHGYSISNSSIT.

S111–P114 contributes to the (6S)-5,6,7,8-tetrahydrofolate binding site.

The protein belongs to the Fmt family.

It carries out the reaction L-methionyl-tRNA(fMet) + (6R)-10-formyltetrahydrofolate = N-formyl-L-methionyl-tRNA(fMet) + (6S)-5,6,7,8-tetrahydrofolate + H(+). Its function is as follows. Attaches a formyl group to the free amino group of methionyl-tRNA(fMet). The formyl group appears to play a dual role in the initiator identity of N-formylmethionyl-tRNA by promoting its recognition by IF2 and preventing the misappropriation of this tRNA by the elongation apparatus. In Ehrlichia chaffeensis (strain ATCC CRL-10679 / Arkansas), this protein is Methionyl-tRNA formyltransferase.